A 205-amino-acid chain; its full sequence is Protein phosphatase inhibitor 2 family member B (205 aa).

A disordered region spans residues 1–44 (MAASTASHRPIKGILKNKTSTTSSMVASAEQPRRSVDEELSKKS). Ala2 carries the N-acetylalanine modification. 2 required for binding PPP1CC regions span residues 12-17 (KGILKN) and 43-55 (KSQKWDEINILAT). Polar residues predominate over residues 17-26 (NKTSTTSSMV). A compositionally biased stretch (basic and acidic residues) spans 31–44 (QPRRSVDEELSKKS). Residue Ser44 is modified to Phosphoserine. 2 positions are modified to phosphothreonine: Thr89 and Thr92. Positions 111-142 (EPKYRIQEQESSGEEDSDLSPEEREKKRQFEM) are disordered. Ser121, Ser122, Ser127, and Ser130 each carry phosphoserine. The segment covering 121–130 (SSGEEDSDLS) has biased composition (acidic residues). Residues 131 to 142 (PEEREKKRQFEM) show a composition bias toward basic and acidic residues. A required for binding PPP1CC catalytic center, displacing metal ions and inhibition of PPP1CC catalytic activity region spans residues 147–150 (HYNE). The segment at 163 to 205 (KDLHDDDEDEEMLETADGESMNTEESNQGSTPSDQQQNKLRSS) is disordered. Residues 167-179 (DDDEDEEMLETAD) show a composition bias toward acidic residues. Residues 182 to 205 (SMNTEESNQGSTPSDQQQNKLRSS) show a composition bias toward polar residues.

The protein belongs to the protein phosphatase inhibitor 2 family. As to quaternary structure, interacts with PPP1CC. In terms of tissue distribution, only detected in spermatozoa, both heads and tails.

Functionally, inhibitor of protein-phosphatase 1. The chain is Protein phosphatase inhibitor 2 family member B from Homo sapiens (Human).